Reading from the N-terminus, the 320-residue chain is HPr kinase/phosphorylase (320 aa).

Active-site residues include histidine 141 and lysine 162. 156 to 163 contacts ATP; sequence GHSGLGKS. Serine 163 is a binding site for Mg(2+). The active-site Proton acceptor; for phosphorylation activity. Proton donor; for dephosphorylation activity is aspartate 180. The segment at 204–213 is important for the catalytic mechanism of both phosphorylation and dephosphorylation; that stretch reads LEVRGLGILN. Residue glutamate 205 participates in Mg(2+) binding. The active site involves arginine 248. The segment at 269–274 is important for the catalytic mechanism of dephosphorylation; sequence PVAVGR.

It belongs to the HPrK/P family. Homohexamer. Mg(2+) serves as cofactor.

It catalyses the reaction [HPr protein]-L-serine + ATP = [HPr protein]-O-phospho-L-serine + ADP + H(+). It carries out the reaction [HPr protein]-O-phospho-L-serine + phosphate + H(+) = [HPr protein]-L-serine + diphosphate. Catalyzes the ATP- as well as the pyrophosphate-dependent phosphorylation of a specific serine residue in HPr, a phosphocarrier protein of the phosphoenolpyruvate-dependent sugar phosphotransferase system (PTS). HprK/P also catalyzes the pyrophosphate-producing, inorganic phosphate-dependent dephosphorylation (phosphorolysis) of seryl-phosphorylated HPr (P-Ser-HPr). This Neisseria gonorrhoeae (strain ATCC 700825 / FA 1090) protein is HPr kinase/phosphorylase.